We begin with the raw amino-acid sequence, 713 residues long: Phospholipase A1 PLIP2, chloroplastic (713 aa).

A chloroplast-targeting transit peptide spans 1 to 32 (MDSLCLNSGLHGVIPAITAVGNGGCGGVVEVR). Disordered regions lie at residues 118–140 (WKHEEEEDDDEVEDEDGDEDEEV) and 232–261 (ALKAENGEVSGETKPIVEAEEEVEEEEKNK). A compositionally biased stretch (acidic residues) spans 122-140 (EEEDDDEVEDEDGDEDEEV). The short motif at 426-430 (GHSLG) is the GXSXG element. Ser428 acts as the Acyl-ester intermediate in catalysis. Catalysis depends on charge relay system residues Asp489 and His608.

Belongs to the AB hydrolase superfamily. Lipase family.

It is found in the plastid. The protein localises to the chloroplast membrane. The protein resides in the chloroplast stroma. It carries out the reaction a 1,2-diacyl-3-O-(beta-D-galactosyl)-sn-glycerol + 2 H2O = 3-beta-D-galactosyl-sn-glycerol + 2 a fatty acid + 2 H(+). It catalyses the reaction a 1,2-diacyl-sn-glycero-3-phosphocholine + H2O = a 2-acyl-sn-glycero-3-phosphocholine + a fatty acid + H(+). The enzyme catalyses 1-hexadecanoyl-2-(9Z-octadecenoyl)-sn-glycero-3-phosphocholine + H2O = 2-(9Z-octadecenoyl)-sn-glycero-3-phosphocholine + hexadecanoate + H(+). The catalysed reaction is 1,2-di-(9Z-octadecenoyl)-sn-glycero-3-phosphocholine + H2O = 2-(9Z-octadecenoyl)-sn-glycero-3-phosphocholine + (9Z)-octadecenoate + H(+). It carries out the reaction 1-octadecanoyl-2-(9Z-octadecenoyl)-sn-glycero-3-phosphocholine + H2O = 2-(9Z-octadecenoyl)-sn-glycero-3-phosphocholine + octadecanoate + H(+). It catalyses the reaction 1-octadecanoyl-2-(9Z,12Z)-octadecadienoyl-sn-glycero-3-phosphocholine + H2O = 2-(9Z,12Z-octadecadienoyl)-sn-glycero-3-phosphocholine + octadecanoate + H(+). The enzyme catalyses 1,2-di-(9Z,12Z-octadecadienoyl)-sn-glycero-3-phosphocholine + H2O = 2-(9Z,12Z-octadecadienoyl)-sn-glycero-3-phosphocholine + (9Z,12Z)-octadecadienoate + H(+). The catalysed reaction is 1-(9Z-octadecenoyl)-2-hexadecanoyl-sn-glycero-3-phosphocholine + H2O = 2-hexadecanoyl-sn-glycero-3-phosphocholine + (9Z)-octadecenoate + H(+). In terms of biological role, sn-1-specific phospholipase A1 that catalyzes the initial step of oxylipins and jasmonate (JA) biosynthesis. Hydrolyzes polyunsaturated acyl groups preferentially from chloroplastic monogalactosyldiacylglycerol (MGDG). May function downstream of abscisic acid (ABA) and provide a link between ABA-mediated abiotic stress responses and oxylipin and JA signalings. In vitro, possesses broad substrate specificity. Can hydrolyze the galactolipids monogalactosyldiacylglycerol (MGDG) and digalactosyldiacylglycerol (DGDG), the sulfolipid sulfoquinovosyldiacylglycerol (SQDG), and the phoshpolipids phosphatidylcholine (PC), and phosphatidylglycerol (PG). The chain is Phospholipase A1 PLIP2, chloroplastic from Arabidopsis thaliana (Mouse-ear cress).